The chain runs to 563 residues: Calmodulin-binding protein 60 G (563 aa).

Positions 1–76 (MKIRNSPSFH…SSCVSMERSR (76 aa)) are calmodulin-binding. The tract at residues 147–263 (ESWTVEGFNR…VSATRLAERK (117 aa)) is DNA-binding.

It belongs to the plant ACBP60 protein family. In terms of assembly, interacts with calmodulin (CaM) in the presence of calcium ions; this interaction is required for defense responses. As to quaternary structure, (Microbial infection) Interacts with V.dahliae SCP41; the interaction is direct and inhibits CBP60G. In terms of tissue distribution, expressed in seedlings, roots, leaves, inflorescences and flowers, and, to a lower extent, in siliques. Particularly present in guard cells.

It is found in the nucleus. In terms of biological role, transcription activator that binds DNA in a sequence-specific manner, 5'-GAAATTTTGG-3', to promote the expression of target genes. Recruited to the promoter of ICS1 and other defense-related genes (e.g. PR1, PR2 and EDS5) in response to both biotic (e.g. Pseudomonas syringae pv. maculicola ES4326, P.syringae pv. tomato DC3000, and microbe-associated molecular patterns (MAMPs) such as flg22) and abiotic stresses (e.g. UV-B, drought and abscisic acid), thus triggering rapid defense responses by stimulating salicylic acid (SA) biosynthesis. Involved in basal and systemic acquired resistance to P.syringae and Hyaloperonospora arabidopsidis. Mediates resistance to drought and sensitivity to abscisic acid (ABA), especially for ABA-mediated signaling process that regulates early seedling growth. The sequence is that of Calmodulin-binding protein 60 G from Arabidopsis thaliana (Mouse-ear cress).